Reading from the N-terminus, the 465-residue chain is Cysteine--tRNA ligase (465 aa).

Residue Cys-28 coordinates Zn(2+). The 'HIGH' region signature appears at Met-30 to His-40. Zn(2+) contacts are provided by Cys-209, His-234, and Glu-238. Positions Lys-266 to Ser-270 match the 'KMSKS' region motif. Lys-269 contacts ATP.

It belongs to the class-I aminoacyl-tRNA synthetase family. As to quaternary structure, monomer. Zn(2+) serves as cofactor.

It localises to the cytoplasm. The enzyme catalyses tRNA(Cys) + L-cysteine + ATP = L-cysteinyl-tRNA(Cys) + AMP + diphosphate. This Methylococcus capsulatus (strain ATCC 33009 / NCIMB 11132 / Bath) protein is Cysteine--tRNA ligase.